The primary structure comprises 101 residues: Small ribosomal subunit protein uS14 (101 aa).

The protein belongs to the universal ribosomal protein uS14 family. As to quaternary structure, part of the 30S ribosomal subunit. Contacts proteins S3 and S10.

Functionally, binds 16S rRNA, required for the assembly of 30S particles and may also be responsible for determining the conformation of the 16S rRNA at the A site. The sequence is that of Small ribosomal subunit protein uS14 from Buchnera aphidicola subsp. Acyrthosiphon pisum (strain APS) (Acyrthosiphon pisum symbiotic bacterium).